A 395-amino-acid polypeptide reads, in one-letter code: 3-sulfinopropanoyl-CoA desulfinase (395 aa).

FAD contacts are provided by residues 121 to 124, serine 130, and 153 to 156; these read ICIS and YWIT. Residue 243–244 participates in substrate binding; it reads YN. Residues arginine 272, glutamine 339, serine 343, 366 to 370, and glutamine 387 each bind FAD; that span reads GGTAQ.

The protein belongs to the acyl-CoA dehydrogenase family. Homotrimer or homotetramer. FAD is required as a cofactor.

It catalyses the reaction 3-sulfinopropanoyl-CoA + H2O = propanoyl-CoA + sulfite + H(+). Functionally, catalyzes the conversion 3-sulfinopropanoyl-CoA (3SP-CoA) to propanoyl-CoA by abstraction of sulfite. Does not show dehydrogenase activity. This is 3-sulfinopropanoyl-CoA desulfinase from Cupriavidus necator (strain ATCC 43291 / DSM 13513 / CCUG 52238 / LMG 8453 / N-1) (Ralstonia eutropha).